The following is a 667-amino-acid chain: DNA ligase (667 aa).

NAD(+)-binding positions include 32 to 36 (DSVYD), 81 to 82 (SL), and E111. K113 serves as the catalytic N6-AMP-lysine intermediate. 4 residues coordinate NAD(+): R134, E168, K285, and K309. Positions 403, 406, 421, and 426 each coordinate Zn(2+). Positions 588–667 (VGDNPFAGKT…DNLIEQLNLI (80 aa)) constitute a BRCT domain.

This sequence belongs to the NAD-dependent DNA ligase family. LigA subfamily. The cofactor is Mg(2+). Requires Mn(2+) as cofactor.

The enzyme catalyses NAD(+) + (deoxyribonucleotide)n-3'-hydroxyl + 5'-phospho-(deoxyribonucleotide)m = (deoxyribonucleotide)n+m + AMP + beta-nicotinamide D-nucleotide.. Its function is as follows. DNA ligase that catalyzes the formation of phosphodiester linkages between 5'-phosphoryl and 3'-hydroxyl groups in double-stranded DNA using NAD as a coenzyme and as the energy source for the reaction. It is essential for DNA replication and repair of damaged DNA. This is DNA ligase from Lysinibacillus sphaericus (strain C3-41).